The following is a 102-amino-acid chain: Protamine-2 (102 aa).

The interval 1 to 102 is disordered; the sequence is MVRCRVRSPS…RTRRRTCRRH (102 aa). A phosphoserine mark is found at serine 8, serine 10, and serine 37. Over residues 8–17 the composition is skewed to basic and acidic residues; the sequence is SPSERSHEVY. A compositionally biased stretch (basic and acidic residues) spans 39–48; sequence EHVEVYERTH. Basic residues predominate over residues 49 to 102; that stretch reads GHSHYRRRHCSRRRLRRIHRQQHRSCRRRKRRSCRHRRRHRKGCRTRRRTCRRH.

This sequence belongs to the protamine P2 family. As to quaternary structure, interacts with TDRP. In terms of processing, proteolytic processing into mature chains is required for histone eviction during spermatogenesis. Transition proteins (TNP1 and TNP2) are required for processing. In terms of tissue distribution, testis.

The protein localises to the nucleus. It localises to the chromosome. Functionally, protamines substitute for histones in the chromatin of sperm during the haploid phase of spermatogenesis. They compact sperm DNA into a highly condensed, stable and inactive complex. This is Protamine-2 (PRM2) from Gorilla gorilla gorilla (Western lowland gorilla).